A 367-amino-acid polypeptide reads, in one-letter code: Chorismate synthase (367 aa).

R48 contacts NADP(+). FMN-binding positions include 125–127 (RSS), G284, 299–303 (KPTPS), and R325.

It belongs to the chorismate synthase family. Homotetramer. Requires FMNH2 as cofactor.

It catalyses the reaction 5-O-(1-carboxyvinyl)-3-phosphoshikimate = chorismate + phosphate. The protein operates within metabolic intermediate biosynthesis; chorismate biosynthesis; chorismate from D-erythrose 4-phosphate and phosphoenolpyruvate: step 7/7. Functionally, catalyzes the anti-1,4-elimination of the C-3 phosphate and the C-6 proR hydrogen from 5-enolpyruvylshikimate-3-phosphate (EPSP) to yield chorismate, which is the branch point compound that serves as the starting substrate for the three terminal pathways of aromatic amino acid biosynthesis. This reaction introduces a second double bond into the aromatic ring system. In Lachnoclostridium phytofermentans (strain ATCC 700394 / DSM 18823 / ISDg) (Clostridium phytofermentans), this protein is Chorismate synthase.